The sequence spans 92 residues: Small ribosomal subunit protein bS20 (92 aa).

The segment at 1–25 (MANSAQARKRARQAAKANSHNSALR) is disordered.

Belongs to the bacterial ribosomal protein bS20 family.

Its function is as follows. Binds directly to 16S ribosomal RNA. This is Small ribosomal subunit protein bS20 from Paraburkholderia phytofirmans (strain DSM 17436 / LMG 22146 / PsJN) (Burkholderia phytofirmans).